A 404-amino-acid polypeptide reads, in one-letter code: Cysteine desulfurase IscS (404 aa).

Pyridoxal 5'-phosphate contacts are provided by residues 75–76 (AT), asparagine 155, glutamine 183, and 203–205 (SGH). Position 206 is an N6-(pyridoxal phosphate)lysine (lysine 206). Residue threonine 243 participates in pyridoxal 5'-phosphate binding. Cysteine 328 acts as the Cysteine persulfide intermediate in catalysis. Cysteine 328 contacts [2Fe-2S] cluster.

The protein belongs to the class-V pyridoxal-phosphate-dependent aminotransferase family. NifS/IscS subfamily. Homodimer. Forms a heterotetramer with IscU, interacts with other sulfur acceptors. Requires pyridoxal 5'-phosphate as cofactor.

The protein localises to the cytoplasm. The enzyme catalyses (sulfur carrier)-H + L-cysteine = (sulfur carrier)-SH + L-alanine. Its pathway is cofactor biosynthesis; iron-sulfur cluster biosynthesis. In terms of biological role, master enzyme that delivers sulfur to a number of partners involved in Fe-S cluster assembly, tRNA modification or cofactor biosynthesis. Catalyzes the removal of elemental sulfur atoms from cysteine to produce alanine. Functions as a sulfur delivery protein for Fe-S cluster synthesis onto IscU, an Fe-S scaffold assembly protein, as well as other S acceptor proteins. The polypeptide is Cysteine desulfurase IscS (Serratia proteamaculans (strain 568)).